A 1295-amino-acid polypeptide reads, in one-letter code: DNA-directed RNA polymerase subunit beta' (1295 aa).

Residues cysteine 60, cysteine 62, cysteine 75, and cysteine 78 each coordinate Zn(2+). Aspartate 516, aspartate 518, and aspartate 520 together coordinate Mg(2+). Residues cysteine 841, cysteine 914, cysteine 921, and cysteine 924 each contribute to the Zn(2+) site.

It belongs to the RNA polymerase beta' chain family. The RNAP catalytic core consists of 2 alpha, 1 beta, 1 beta' and 1 omega subunit. When a sigma factor is associated with the core the holoenzyme is formed, which can initiate transcription. Requires Mg(2+) as cofactor. Zn(2+) is required as a cofactor.

The catalysed reaction is RNA(n) + a ribonucleoside 5'-triphosphate = RNA(n+1) + diphosphate. Its function is as follows. DNA-dependent RNA polymerase catalyzes the transcription of DNA into RNA using the four ribonucleoside triphosphates as substrates. This Dehalococcoides mccartyi (strain CBDB1) protein is DNA-directed RNA polymerase subunit beta'.